The primary structure comprises 493 residues: GTPase Der (493 aa).

2 EngA-type G domains span residues 3–166 and 207–380; these read PVVA…SGKG and LKLA…DCAT. GTP-binding positions include 9-16, 56-60, 118-121, 213-220, 260-264, and 325-328; these read GRPNVGKS, DTGGI, NKTD, GKPNVGKS, DTAGV, and NKWD. The 85-residue stretch at 381 to 465 folds into the KH-like domain; sequence RRVNTSLLTR…PIRIQFKEGA (85 aa).

This sequence belongs to the TRAFAC class TrmE-Era-EngA-EngB-Septin-like GTPase superfamily. EngA (Der) GTPase family. Associates with the 50S ribosomal subunit.

Its function is as follows. GTPase that plays an essential role in the late steps of ribosome biogenesis. In Photorhabdus laumondii subsp. laumondii (strain DSM 15139 / CIP 105565 / TT01) (Photorhabdus luminescens subsp. laumondii), this protein is GTPase Der.